Consider the following 356-residue polypeptide: Golgi-resident adenosine 3',5'-bisphosphate 3'-phosphatase (356 aa).

Met-1 bears the N-acetylmethionine mark. The Cytoplasmic segment spans residues 1–12 (MAPMGIRLSPLG). A helical membrane pass occupies residues 13-33 (VAVFFLLGLGVLYHLYSGFLA). Over 34 to 356 (GRFSLFGLGG…KLPDLEKSGH (323 aa)) the chain is Lumenal. The disordered stretch occupies residues 82–104 (VRESNVLHEKSKGKTREGAEDKM). The Proton acceptor role is filled by Asp-108. Residues Glu-131, Asp-172, Leu-174, and Asp-175 each contribute to the Mg(2+) site. Thr-177 (proton acceptor) is an active-site residue. AMP is bound by residues Ser-240 and His-243. A glycan (N-linked (GlcNAc...) asparagine) is linked at Asn-257. Residues Gly-266 and Lys-270 each coordinate AMP. Position 298 (Asp-298) interacts with Mg(2+).

This sequence belongs to the inositol monophosphatase superfamily. It depends on Mg(2+) as a cofactor. Post-translationally, contains N-linked glycan resistant to endoglycosydase H.

The protein resides in the golgi apparatus. Its subcellular location is the trans-Golgi network membrane. It carries out the reaction adenosine 3',5'-bisphosphate + H2O = AMP + phosphate. It functions in the pathway sulfur metabolism. With respect to regulation, strongly inhibited by lithium. Exhibits 3'-nucleotidase activity toward adenosine 3',5'-bisphosphate (PAP), namely hydrolyzes adenosine 3',5'-bisphosphate into adenosine 5'-monophosphate (AMP) and a phosphate. May play a role in the formation of skeletal elements derived through endochondral ossification, possibly by clearing adenosine 3',5'-bisphosphate produced by Golgi sulfotransferases during glycosaminoglycan sulfation. Has no activity toward 3'-phosphoadenosine 5'-phosphosulfate (PAPS) or inositol phosphate (IP) substrates including I(1)P, I(1,4)P2, I(1,3,4)P3, I(1,4,5)P3 and I(1,3,4,5)P4. The protein is Golgi-resident adenosine 3',5'-bisphosphate 3'-phosphatase (Bpnt2) of Rattus norvegicus (Rat).